Reading from the N-terminus, the 586-residue chain is Maltogenic alpha-amylase (586 aa).

The Ca(2+) site is built by Asn-147, Asn-152, Asp-153, Gly-172, and Asp-174. Positions 247 and 326 each coordinate substrate. Asp-328 (nucleophile) is an active-site residue. Glu-357 (proton donor) is an active-site residue. Substrate contacts are provided by residues His-423 to Asp-424, Asp-468, and Arg-472.

Belongs to the glycosyl hydrolase 13 family. Requires Ca(2+) as cofactor.

It catalyses the reaction hydrolysis of (1-&gt;4)-alpha-D-glucosidic linkages in polysaccharides so as to remove successive alpha-maltose residues from the non-reducing ends of the chains.. Converts starch into maltose. The sequence is that of Maltogenic alpha-amylase from Bacillus acidopullulyticus.